We begin with the raw amino-acid sequence, 1668 residues long: FEPYIYALLKDDSAIEEVKKITAGRHGRVVKVKRAEKVKKKFLGRPIEVWKLYFTHPQDVPAIRDEIRRHSAVVDIYEYDIPFAKRYLIDKGLIPMEGDEELKMMSFDIETLYHEGEEFGTGPILMISYADEGEARVITWKKIDLPYVEVVSTEKEMIKRFLKVVKEKDPDVLITYNGDNFDFAYLKKRCEKIGIKFTLRRDGSEPKIQRMGDRFAVEVKGRIHFDLYPVIRRTINLPTYTLEAVYEAVFGTPKEKVYPEEITTAWETGEGLERVARYSMEDAKVTYELGREFFPMEAQLSRLIGQSLWDVSRSSTGNLVEWFLLRKAYERNEIAPNKPDERELARRRGGYAGGYVKEPERGLWDNIVYLDFMSLYPSIIITHNVSPDTFNREGCKEYDTAPQVGHKFCKDVQGFIPSLLGALLDERQKIKKRMKASIDPLEKKLLDYRQKAIKILANSLLPEEWIPLVENGKVRLHRIGEFVDKLMETDSELVKRNGDTEVLEVRGIRALSFDRKSKKARVMPVKAVIRHRYSGDVYEIVLGSGRRITVTEGHSLFAYGDGELREVTGGEIKAGDLLAVPRRVNLPEKKERLNLVELLRRLPEEETGDIILTIPVKGRKNFFKGMLRTLRWISGEEKRPRTARRYLEHLEGLGYVRLKKIGYEVTDREGLERYRKLYERLVEAVRYNGNKREYLVEFNAVRDVIALMPEEELRDWLVGTRNGFRMRPFVEIEEDFAKLLGYYVSEGNARKWRNQKNGWSYTVKLYNENQRVLDDMESLAERFFGRVKRGKNYIEIPRKMAYIIFENLCGTLAENKRVPEAIFTSPESVRWAFIEGYFIGDGDVHPSKRVRLSTKSELLVNGLVLLLNSLGVSAIKIRHDSGVYRVYVNEELPFTDYRKKKNAYYSHVIPKEILEETFGKVFQRSVSYEKFRELVKSEKLDGEKAKRIEWLLNGDVVLDKVLEVKKRPYEGYVYDLSVEEDENFLAGFGLLYAHNSYYGYYGYARARWYCKECAESVTAWGRDYIETTIHEIEERFGFKVLYADSVTGETEIIIKRNGKVEFVAIEELFQRVDYRIGEKEYCVLEGVEALTLDNRGRLVWKSVPYVMRHRTNKRIYRVWFTNSWYLDVTEDHSLIGYMNTSKVKPGKPLKERLVEVKPGELGESVKSLITPNRAIAHGIRVNPIAVKLWELIGLLVGDGNWGGQSNWAKYNVGLSLGLDKEEIEEKILKPLKNTGIISNYYDKSKKGDVSILSKWLARFMVRYFKDESGSKRIPEFMFNLPREYIEAFLRGLFSADGTVSLRKGVPEVRLTSVNPELSSSVRKLLWLVGVSNSMFVETNPNRYLGKESGTHSVHVRIKDKHRFAERIGFLLDRKATKLSENLGGHTSKKRAYKYDFDLVYPKKVEEIAYDGYVYDIEVEGTHRFFANGILVHNTDGFFATIPGADAETVKKKAKEFLKYINAKLPGLLELEYEGFYVRGFFVTKKKYAVIDEEGKITTRGLEIVRRDWSEIAKETQARVLEAILRHGDVEEAVRIVKDVTEKLSKYEVPPEKLVIHEQITRELKDYKATGPHVAIAKRLAARGIKIRPGTVISYIVLKGSGRIGDRAIPFDEFDPTKHRYDAEYYIENQVLPAVERILKAFGYKKEELRYQKTRQVGLGAWLKLKGKK.

DOD-type homing endonuclease domains are found at residues 739-872 and 1191-1330; these read LLGY…SLGV and LIGL…LVGV.

This sequence belongs to the DNA polymerase type-B family. This protein undergoes a protein self splicing that involves a post-translational excision of the intervening region (intein) followed by peptide ligation.

It catalyses the reaction DNA(n) + a 2'-deoxyribonucleoside 5'-triphosphate = DNA(n+1) + diphosphate. Functionally, in addition to polymerase activity, this DNA polymerase exhibits 3' to 5' exonuclease activity. Its function is as follows. PI-ThyI and PI-ThyII are endonucleases. PI-ThyI cleaves the inteinless sequence of the Thy DNA pol gene. It requires a 21-bp minimal recognition sequence. This is DNA polymerase (pol) from Thermococcus hydrothermalis.